Reading from the N-terminus, the 357-residue chain is S-adenosylmethionine:tRNA ribosyltransferase-isomerase (357 aa).

This sequence belongs to the QueA family. Monomer.

The protein localises to the cytoplasm. It catalyses the reaction 7-aminomethyl-7-carbaguanosine(34) in tRNA + S-adenosyl-L-methionine = epoxyqueuosine(34) in tRNA + adenine + L-methionine + 2 H(+). It participates in tRNA modification; tRNA-queuosine biosynthesis. Transfers and isomerizes the ribose moiety from AdoMet to the 7-aminomethyl group of 7-deazaguanine (preQ1-tRNA) to give epoxyqueuosine (oQ-tRNA). This Buchnera aphidicola subsp. Acyrthosiphon pisum (strain Tuc7) protein is S-adenosylmethionine:tRNA ribosyltransferase-isomerase.